The following is a 377-amino-acid chain: Chaperone protein DnaJ (377 aa).

In terms of domain architecture, J spans 5–70 (DFYEVLGVER…SKRAAYDQYG (66 aa)). The CR-type zinc-finger motif lies at 136–214 (GTTVTIRVPT…CHGQGRVEEQ (79 aa)). Cys-149, Cys-152, Cys-166, Cys-169, Cys-188, Cys-191, Cys-202, and Cys-205 together coordinate Zn(2+). 4 CXXCXGXG motif repeats span residues 149–156 (CKTCNGSG), 166–173 (CTTCGGIG), 188–195 (CPRCHGTG), and 202–209 (CGSCHGQG).

This sequence belongs to the DnaJ family. Homodimer. Zn(2+) serves as cofactor.

The protein localises to the cytoplasm. Functionally, participates actively in the response to hyperosmotic and heat shock by preventing the aggregation of stress-denatured proteins and by disaggregating proteins, also in an autonomous, DnaK-independent fashion. Unfolded proteins bind initially to DnaJ; upon interaction with the DnaJ-bound protein, DnaK hydrolyzes its bound ATP, resulting in the formation of a stable complex. GrpE releases ADP from DnaK; ATP binding to DnaK triggers the release of the substrate protein, thus completing the reaction cycle. Several rounds of ATP-dependent interactions between DnaJ, DnaK and GrpE are required for fully efficient folding. Also involved, together with DnaK and GrpE, in the DNA replication of plasmids through activation of initiation proteins. This is Chaperone protein DnaJ from Pseudomonas aeruginosa (strain LESB58).